Reading from the N-terminus, the 194-residue chain is Serine/threonine-protein kinase mos (194 aa).

The 148-residue stretch at 47–194 (LCLLHLLGSG…HLDLKPANIF (148 aa)) folds into the Protein kinase domain. ATP-binding positions include 53-61 (LGSGGFGSV) and Lys-74. Residue Asp-187 is the Proton acceptor of the active site.

Belongs to the protein kinase superfamily. Ser/Thr protein kinase family.

The catalysed reaction is L-seryl-[protein] + ATP = O-phospho-L-seryl-[protein] + ADP + H(+). It carries out the reaction L-threonyl-[protein] + ATP = O-phospho-L-threonyl-[protein] + ADP + H(+). This is Serine/threonine-protein kinase mos (MOS) from Atheris squamigera (Variable bush viper).